A 1173-amino-acid polypeptide reads, in one-letter code: MASSSSSERWIDGLQFSSLLWPPPRDPQQHKDQVVAYVEYFGQFTSEQFPDDIAELVRHQYPSTEKRLLDDVLAMFVLHHPEHGHAVILPIISCLIDGSLVYSKEAHPFASFISLVCPSSENDYSEQWALACGEILRILTHYNRPIYKTEQQNGDTERNCLSKATTSGSPTSEPKAGSPTQHERKPLRPLSPWISDILLAAPLGIRSDYFRWCSGVMGKYAAGELKPPTIASRGSGKHPQLMPSTPRWAVANGAGVILSVCDDEVARYETATLTAVAVPALLLPPPTTSLDEHLVAGLPALEPYARLFHRYYAIATPSATQRLLLGLLEAPPSWAPDALDAAVQLVELLRAAEDYASGVRLPRNWMHLHFLRAIGIAMSMRAGVAADAAAALLFRILSQPALLFPPLSQVEGVEIQHAPIGGYSSNYRKQIEVPAAEATIEATAQGIASMLCAHGPEVEWRICTIWEAAYGLIPLNSSAVDLPEIIVATPLQPPILSWNLYIPLLKVLEYLPRGSPSEACLMKIFVATVETILSRTFPPESSRELTRKARSSFTTRSATKNLAMSELRAMVHALFLESCAGVELASRLLFVVLTVCVSHEAQSSGSKRPRSEYASTTENIEANQPVSNNQTANRKSRNVKGQGPVAAFDSYVLAAVCALACEVQLYPMISGGGNFSNSAVAGTITKPVKINGSSKEYGAGIDSAISHTRRILAILEALFSLKPSSVGTPWSYSSSEIVAAAMVAAHISELFRRSKALTHALSGLMRCKWDKEIHKRASSLYNLIDVHSKVVASIVDKAEPLEAYLKNTPVQKDSVTCLNWKQENTCASTTCFDTAVTSASRTEMNPRGNHKYARHSDEGSGRPSEKGIKDFLLDASDLANFLTADRLAGFYCGTQKLLRSVLAEKPELSFSVVSLLWHKLIAAPEIQPTAESTSAQQGWRQVVDALCNVVSATPAKAAAAVVLQAERELQPWIAKDDEEGQKMWKINQRIVKVLVELMRNHDRPESLVILASASDLLLRATDGMLVDGEACTLPQLELLEATARAIQPVLAWGPSGLAVVDGLSNLLKCRLPATIRCLSHPSAHVRALSTSVLRDIMNQSSIPIKVTPKLPTTEKNGMNSPSYRFFNAASIDWKADIQNCLNWEAHSLLSTTMPTQFLDTAARELGCTISLSQ.

3 disordered regions span residues 150–187, 604–641, and 840–863; these read EQQN…RKPL, SGSK…NVKG, and SRTE…SGRP. 2 stretches are compositionally biased toward polar residues: residues 162 to 172 and 613 to 633; these read SKATTSGSPTS and YAST…QTAN. Residues 854–863 show a composition bias toward basic and acidic residues; that stretch reads RHSDEGSGRP.

Belongs to the GIGANTEA family. In terms of assembly, interacts with SPY. Interacts with ADO1 (via N-terminus) and ADO2. Interacts with ADO3 (via N-terminus). Interacts (via N-terminus) with CDF1. Interacts (via N-terminus) with TCP4. As to expression, widely expressed with highest levels in inflorescence apices, young flowers and young siliques.

Its subcellular location is the nucleus. The protein resides in the cytoplasm. Involved in regulation of circadian rhythm and photoperiodic flowering. May play a role in maintenance of circadian amplitude and period length. Is involved in phytochrome B signaling. Stabilizes ADO3 and the circadian photoreceptor ADO1/ZTL. Regulates 'CONSTANS' (CO) in the long-day flowering pathway by modulating the ADO3-dependent protein stability of CDF1 and CDF2, but is not essential to activate CO transcription. Regulates, via the microRNA miR172, a CO-independent pathway that promotes photoperiodic flowering by inducing 'FLOWERING LOCUS T'. The polypeptide is Protein GIGANTEA (GI) (Arabidopsis thaliana (Mouse-ear cress)).